Consider the following 380-residue polypeptide: O-antigen polymerase (380 aa).

Helical transmembrane passes span 1 to 21 (MTYF…RLTP), 27 to 47 (NIVL…TFNE), 55 to 75 (ATTL…YILI), 94 to 114 (YIYW…IILL), 132 to 152 (SISG…MYLA), 169 to 189 (FLLA…VYIV), 201 to 221 (LIYG…LGKF), 229 to 249 (IISA…AAFN), 282 to 302 (ILPW…FAPW), 306 to 326 (LGLY…GIWF), 332 to 352 (LAVG…FFQE), and 353 to 373 (HYLL…LLAM).

It localises to the cell inner membrane. The enzyme catalyses n lipid-linked O-antigen repeat units = a lipid-linked O antigen + (n-1) polyisoprenyl diphosphate.. It functions in the pathway bacterial outer membrane biogenesis; LPS O-antigen biosynthesis. Functionally, polymerase involved in the biosynthesis of the lipopolysaccharide (LPS). Catalyzes the polymerization of the O-antigen repeat units on the periplasmic face of the inner membrane, leading to the formation of the lipid-linked O-antigen molecule. In Shigella dysenteriae, this protein is O-antigen polymerase.